The following is a 268-amino-acid chain: Hydroxyethylthiazole kinase (268 aa).

Residue Met-45 participates in substrate binding. Residues Arg-121 and Thr-167 each contribute to the ATP site. Substrate is bound at residue Gly-194.

The protein belongs to the Thz kinase family. Mg(2+) serves as cofactor.

It catalyses the reaction 5-(2-hydroxyethyl)-4-methylthiazole + ATP = 4-methyl-5-(2-phosphooxyethyl)-thiazole + ADP + H(+). Its pathway is cofactor biosynthesis; thiamine diphosphate biosynthesis; 4-methyl-5-(2-phosphoethyl)-thiazole from 5-(2-hydroxyethyl)-4-methylthiazole: step 1/1. Functionally, catalyzes the phosphorylation of the hydroxyl group of 4-methyl-5-beta-hydroxyethylthiazole (THZ). The polypeptide is Hydroxyethylthiazole kinase (Bacillus thuringiensis (strain Al Hakam)).